A 300-amino-acid polypeptide reads, in one-letter code: Mitochondrial tricarboxylate transporter 1 (300 aa).

3 Solcar repeats span residues 8–98, 107–197, and 209–294; these read VSPS…FRSM, LSNS…LRDW, and INWL…VVWL. The next 6 helical transmembrane spans lie at 11 to 31, 67 to 87, 114 to 134, 172 to 191, 208 to 228, and 277 to 297; these read SVSVVAGATAGAVEGVATFPI, PKGLFRGCTAMVVGNAGKAGV, LAGMGAGTLEAIFAVTPSETI, GVVPVVMRQGSASAIRLGTY, LINWLATFSIGAASGVVAVYG, and LIVSGGVIFSVYEQVVWLLAG.

It belongs to the mitochondrial carrier (TC 2.A.29) family.

Its subcellular location is the mitochondrion membrane. Functionally, mitochondrial tricarboxylate transporter; part of the gene cluster that mediates the biosynthesis of itaconic acid and 2-hydroxyparaconate. Cis-aconitate is secreted by the mitochondrial tricarboxylate transporter MTT1. In the cytosol cis-aconitate is converted into trans-aconitate via isomerization by the aconitate-delta-isomerase ADI1. Decarboxylation of trans-aconitate by the trans-aconitate decarboxylase TAD1 then leads then to the production of itaconic acid. The cytochrome P450 monooxygenase CYP3 further converts itaconate to 2-hydroxyparaconate via oxidation of the double bond, leading to a transient epoxide, which can subsequently be lactonized to produce 2-hydroxyparaconate. Secretion of itaconate and possibly 2-hydroxyparaconate into the medium is mediated by the major facilitator ITP1. The glyoxalase domain-containing protein RDO1 is not involved in the biosynthesis of itaconate and 2-hydroxyparaconate, however, it might play a role in the further conversion of 2-hydroxyparaconate to itatartarate. This Mycosarcoma maydis (Corn smut fungus) protein is Mitochondrial tricarboxylate transporter 1.